We begin with the raw amino-acid sequence, 97 residues long: Early nodulin-75 (97 aa).

Positions Arg1–Pro97 are disordered. 2 stretches are compositionally biased toward pro residues: residues Glu9–Gln22 and Val31–Lys43. The segment covering Pro76–Pro97 has biased composition (basic and acidic residues).

This sequence belongs to the nodulin 75 family.

Involved in early stages of root nodule development. The chain is Early nodulin-75 (ENOD2) from Medicago sativa (Alfalfa).